The primary structure comprises 312 residues: Glyoxylate/hydroxypyruvate reductase A (312 aa).

R227 is an active-site residue. The active-site Proton donor is the H275.

The protein belongs to the D-isomer specific 2-hydroxyacid dehydrogenase family. GhrA subfamily.

The protein localises to the cytoplasm. The catalysed reaction is glycolate + NADP(+) = glyoxylate + NADPH + H(+). It catalyses the reaction (R)-glycerate + NAD(+) = 3-hydroxypyruvate + NADH + H(+). It carries out the reaction (R)-glycerate + NADP(+) = 3-hydroxypyruvate + NADPH + H(+). Catalyzes the NADPH-dependent reduction of glyoxylate and hydroxypyruvate into glycolate and glycerate, respectively. The chain is Glyoxylate/hydroxypyruvate reductase A from Escherichia coli O81 (strain ED1a).